Consider the following 185-residue polypeptide: MKCIVGLGNPGKKFEMTRHNVGFLAIDRLAEKHGISLNEAKFNALMGTGRINGERVVLVKPLTYMNLSGEAVRPILDYYKIEIDDLLVIYDDLDMVPGKLRFRPKGSAGGHNGIKSLIQHLGTAEFKRLKLGIGRPPHPIKVVDWVLMNYRKDELPELNETLDNAVTAATDFVDTDWLALMNRYN.

Residue Phe14 participates in tRNA binding. The Proton acceptor role is filled by His19. The tRNA site is built by Tyr64, Asn66, and Asn112.

The protein belongs to the PTH family. As to quaternary structure, monomer.

It localises to the cytoplasm. It carries out the reaction an N-acyl-L-alpha-aminoacyl-tRNA + H2O = an N-acyl-L-amino acid + a tRNA + H(+). In terms of biological role, hydrolyzes ribosome-free peptidyl-tRNAs (with 1 or more amino acids incorporated), which drop off the ribosome during protein synthesis, or as a result of ribosome stalling. Its function is as follows. Catalyzes the release of premature peptidyl moieties from peptidyl-tRNA molecules trapped in stalled 50S ribosomal subunits, and thus maintains levels of free tRNAs and 50S ribosomes. The polypeptide is Peptidyl-tRNA hydrolase (Exiguobacterium sp. (strain ATCC BAA-1283 / AT1b)).